The following is a 303-amino-acid chain: Kanosamine kinase (303 aa).

Belongs to the ROK (NagC/XylR) family.

It carries out the reaction kanosamine + ATP = D-kanosamine 6-phosphate + ADP + H(+). The protein operates within antibiotic biosynthesis; rifamycin B biosynthesis. Its activity is regulated as follows. Inhibited by Zn(2+), Cu(2+), and Fe(2+). In terms of biological role, involved in the biosynthesis of 3-amino-5-hydroxybenzoate (AHBA), a compound that then serves as the starter unit for the assembly of a polyketide during the biosynthesis of rifamycin B and other ansamycin antibiotics. Catalyzes only the phosphorylation of kanosamine to yield kanosamine 6-phosphate. The protein is Kanosamine kinase (rifN) of Amycolatopsis mediterranei (strain S699) (Nocardia mediterranei).